Here is a 652-residue protein sequence, read N- to C-terminus: DNA ligase (652 aa).

NAD(+)-binding positions include 29–33 (DSEYD), 78–79 (SL), and glutamate 107. The N6-AMP-lysine intermediate role is filled by lysine 109. Arginine 130, glutamate 164, lysine 278, and lysine 302 together coordinate NAD(+). Residues cysteine 395, cysteine 398, cysteine 413, and cysteine 418 each contribute to the Zn(2+) site. In terms of domain architecture, BRCT spans 577–652 (VADAALSGLT…VRDEAWLESL (76 aa)).

The protein belongs to the NAD-dependent DNA ligase family. LigA subfamily. Mg(2+) serves as cofactor. Requires Mn(2+) as cofactor.

The catalysed reaction is NAD(+) + (deoxyribonucleotide)n-3'-hydroxyl + 5'-phospho-(deoxyribonucleotide)m = (deoxyribonucleotide)n+m + AMP + beta-nicotinamide D-nucleotide.. Its function is as follows. DNA ligase that catalyzes the formation of phosphodiester linkages between 5'-phosphoryl and 3'-hydroxyl groups in double-stranded DNA using NAD as a coenzyme and as the energy source for the reaction. It is essential for DNA replication and repair of damaged DNA. The protein is DNA ligase of Streptococcus pneumoniae (strain Taiwan19F-14).